Here is an 898-residue protein sequence, read N- to C-terminus: Cip1-interacting zinc finger protein (898 aa).

3 disordered regions span residues 48-69 (QAPL…QPLL), 157-305 (QSLL…ALEA), and 318-471 (VQAQ…QPQV). Residues 170–203 (NPSQFNLSGRNPQKQARTSSSTTPNRKDSSSQTM) are compositionally biased toward polar residues. Ser209 is modified (phosphoserine). Thr244 is modified (phosphothreonine). Positions 263 to 273 (RSSEEPTEKEP) are enriched in basic and acidic residues. A Glycyl lysine isopeptide (Lys-Gly) (interchain with G-Cter in SUMO2) cross-link involves residue Lys280. A compositionally biased stretch (low complexity) spans 318–327 (VQAQVQSQTQ). Positions 328–351 (PRIPSTDTQVQPKLQKQAQTQTSP) are enriched in polar residues. Lys340 participates in a covalent cross-link: Glycyl lysine isopeptide (Lys-Gly) (interchain with G-Cter in SUMO2). Residue Ser350 is modified to Phosphoserine. Over residues 355–383 (VLQQKQVQPQLQQEAEPQKQVQPQVQPQA) the composition is skewed to low complexity. Positions 384-395 (HSQGPRQVQLQQ) are enriched in polar residues. Residue Lys401 forms a Glycyl lysine isopeptide (Lys-Gly) (interchain with G-Cter in SUMO2) linkage. Residues 402-435 (QVQPQVQPQAHSQPPRQVQLQLQKQVQTQTYPQV) show a composition bias toward low complexity. Over residues 436–445 (HTQAQPSVQP) the composition is skewed to polar residues. At Ser547 the chain carries Phosphoserine. Lys549 participates in a covalent cross-link: Glycyl lysine isopeptide (Lys-Gly) (interchain with G-Cter in SUMO2). The segment at 562–584 (STVPLTPVPRPSDSVSSTPAATS) is disordered. Thr567 carries the post-translational modification Phosphothreonine. The span at 572–584 (PSDSVSSTPAATS) shows a compositional bias: low complexity. Residues Lys588, Lys680, and Lys705 each participate in a glycyl lysine isopeptide (Lys-Gly) (interchain with G-Cter in SUMO2) cross-link. A Matrin-type zinc finger spans residues 799–830 (YICRICHKFYHSNSGAQLSHCKSLGHFENLQK). A Phosphoserine modification is found at Ser821. Lys830 is covalently cross-linked (Glycyl lysine isopeptide (Lys-Gly) (interchain with G-Cter in SUMO2)). A Phosphoserine modification is found at Ser838. The segment covering 859–879 (LFTSSGRPPSQPNTQDKTPSK) has biased composition (polar residues). Positions 859-898 (LFTSSGRPPSQPNTQDKTPSKVTARPSQPPLPRRSTRLKT) are disordered. Lys879 is covalently cross-linked (Glycyl lysine isopeptide (Lys-Gly) (interchain with G-Cter in SUMO2)).

Interacts with CIP/WAF1.

The protein localises to the nucleus. Functionally, may regulate the subcellular localization of CIP/WAF1. This is Cip1-interacting zinc finger protein (CIZ1) from Homo sapiens (Human).